A 468-amino-acid chain; its full sequence is Glutamate--tRNA ligase (468 aa).

The 'HIGH' region signature appears at 8–18; it reads PSPTGFLHVGG. Positions 97, 99, 124, and 126 each coordinate Zn(2+). The short motif at 236–240 is the 'KMSKS' region element; the sequence is KLSKR. An ATP-binding site is contributed by lysine 239.

It belongs to the class-I aminoacyl-tRNA synthetase family. Glutamate--tRNA ligase type 1 subfamily. In terms of assembly, monomer. Zn(2+) is required as a cofactor.

It localises to the cytoplasm. The enzyme catalyses tRNA(Glu) + L-glutamate + ATP = L-glutamyl-tRNA(Glu) + AMP + diphosphate. In terms of biological role, catalyzes the attachment of glutamate to tRNA(Glu) in a two-step reaction: glutamate is first activated by ATP to form Glu-AMP and then transferred to the acceptor end of tRNA(Glu). The polypeptide is Glutamate--tRNA ligase (Francisella tularensis subsp. novicida (strain U112)).